The sequence spans 373 residues: RNA cytidine acetyltransferase (373 aa).

Arginine 53 is an ATP binding site. Acetyl-CoA-binding positions include 216-218 and 223-229; these read IAT and TGMGYGS. The segment at 246–271 is disordered; sequence GEFEEENEAAKPADEESDDESNLLKE. Arginine 313 is a binding site for acetyl-CoA.

It belongs to the RNA cytidine acetyltransferase family. NAT10 subfamily.

It localises to the nucleus. The protein localises to the nucleolus. The enzyme catalyses a cytidine in 18S rRNA + acetyl-CoA + ATP + H2O = an N(4)-acetylcytidine in 18S rRNA + ADP + phosphate + CoA + H(+). The catalysed reaction is a cytidine in tRNA + acetyl-CoA + ATP + H2O = an N(4)-acetylcytidine in tRNA + ADP + phosphate + CoA + H(+). RNA cytidine acetyltransferase with specificity toward both 18S rRNA and tRNAs. Catalyzes the formation of N(4)-acetylcytidine (ac4C) in 18S rRNA. Required for early nucleolar cleavages of precursor rRNA at sites A0, A1 and A2 during 18S rRNA synthesis. Catalyzes the formation of ac4C in serine and leucine tRNAs. Requires a tRNA-binding adapter protein for full tRNA acetyltransferase activity but not for 18S rRNA acetylation. In Achlya ambisexualis (Water mold), this protein is RNA cytidine acetyltransferase.